The chain runs to 462 residues: Cysteine--tRNA ligase (462 aa).

Residue C28 coordinates Zn(2+). Residues 30–40 (VTAYDLCHIGH) carry the 'HIGH' region motif. C209, H234, and E238 together coordinate Zn(2+). Residues 266–270 (KMSKS) carry the 'KMSKS' region motif. K269 contacts ATP.

The protein belongs to the class-I aminoacyl-tRNA synthetase family. Monomer. Zn(2+) serves as cofactor.

Its subcellular location is the cytoplasm. It catalyses the reaction tRNA(Cys) + L-cysteine + ATP = L-cysteinyl-tRNA(Cys) + AMP + diphosphate. In Baumannia cicadellinicola subsp. Homalodisca coagulata, this protein is Cysteine--tRNA ligase.